The sequence spans 204 residues: Heart- and neural crest derivatives-expressed protein 1 (204 aa).

Disordered regions lie at residues 1 to 24, 57 to 115, and 172 to 204; these read MNLV…HPAH, APDF…RTES, and LKKA…EKRD. Composition is skewed to basic residues over residues 8–22 and 98–110; these read AHHH…HPHP and LGRR…KKER. Residues 100-152 form the bHLH domain; sequence RRKGSGPKKERRRTESINSAFAELRECIPNVPADTKLSKIKTLRLATSYIAYL. Thr-113 bears the Phosphothreonine; by PLK4 mark. Ser-115 is subject to Phosphoserine; by PLK4.

In terms of assembly, efficient DNA binding requires dimerization with another bHLH protein. Forms homodimers and heterodimers with TCF3 gene products E12 and E47, HAND2 and HEY1, HEY2 and HEYL (hairy-related transcription factors). Interacts with MDFIC. Interacts with SOX15; the interaction enhances HAND1-induced differentiation of trophoblast giant cells. Post-translationally, phosphorylation by PLK4 disrupts the interaction with MDFIC and leads to translocation into the nucleoplasm, allowing dimerization and transcription factor activity.

Its subcellular location is the nucleus. It localises to the nucleoplasm. The protein resides in the nucleolus. Its function is as follows. Transcription factor that plays an essential role in both trophoblast giant cell differentiation and in cardiac morphogenesis. Binds the DNA sequence 5'-NRTCTG-3' (non-canonical E-box). Acts as a transcriptional repressor of SOX15. In the adult, could be required for ongoing expression of cardiac-specific genes. The chain is Heart- and neural crest derivatives-expressed protein 1 (HAND1) from Ovis aries (Sheep).